We begin with the raw amino-acid sequence, 143 residues long: Large ribosomal subunit protein uL15 (143 aa).

Residues M1–G47 are disordered. A compositionally biased stretch (gly residues) spans D23–Q35.

This sequence belongs to the universal ribosomal protein uL15 family. In terms of assembly, part of the 50S ribosomal subunit.

Functionally, binds to the 23S rRNA. The protein is Large ribosomal subunit protein uL15 of Lactiplantibacillus plantarum (strain ATCC BAA-793 / NCIMB 8826 / WCFS1) (Lactobacillus plantarum).